The chain runs to 145 residues: D-aminoacyl-tRNA deacylase (145 aa).

Residues 137–138 carry the Gly-cisPro motif, important for rejection of L-amino acids motif; it reads GP.

It belongs to the DTD family. In terms of assembly, homodimer.

It localises to the cytoplasm. The enzyme catalyses glycyl-tRNA(Ala) + H2O = tRNA(Ala) + glycine + H(+). The catalysed reaction is a D-aminoacyl-tRNA + H2O = a tRNA + a D-alpha-amino acid + H(+). Functionally, an aminoacyl-tRNA editing enzyme that deacylates mischarged D-aminoacyl-tRNAs. Also deacylates mischarged glycyl-tRNA(Ala), protecting cells against glycine mischarging by AlaRS. Acts via tRNA-based rather than protein-based catalysis; rejects L-amino acids rather than detecting D-amino acids in the active site. By recycling D-aminoacyl-tRNA to D-amino acids and free tRNA molecules, this enzyme counteracts the toxicity associated with the formation of D-aminoacyl-tRNA entities in vivo and helps enforce protein L-homochirality. This chain is D-aminoacyl-tRNA deacylase, found in Proteus mirabilis (strain HI4320).